A 621-amino-acid chain; its full sequence is pH-response transcription factor pacc-1 (621 aa).

Positions 1-14 are enriched in polar residues; that stretch reads MSSTPAQENGTVNG. The disordered stretch occupies residues 1 to 87; sequence MSSTPAQENG…PTTASNSSAP (87 aa). Positions 15–87 are enriched in low complexity; sequence ANAAPAPAPA…PTTASNSSAP (73 aa). 3 C2H2-type zinc fingers span residues 95 to 120, 131 to 155, and 161 to 183; these read LVCR…CEKH, LTCQ…VRVH, and HKCD…VKTH. 2 disordered regions span residues 395 to 539 and 566 to 621; these read PTYA…PETY and DEDD…PRIN. Low complexity-rich tracts occupy residues 409 to 423 and 436 to 465; these read ASLA…PHSA and SYTS…VSYP. The YPX[LI] motif 1 motif lies at 464 to 467; sequence YPTL. Residues 476-486 show a composition bias toward polar residues; sequence PSTSGLGSNFT. Residues 502 to 511 are compositionally biased toward basic and acidic residues; sequence RAADEADRAP. Residues 515 to 525 show a composition bias toward polar residues; sequence ASEQATVSSPS. Residues 583 to 595 are compositionally biased toward low complexity; that stretch reads RNQQQRNQQQQQQ. The YPX[LI] motif 2 signature appears at 614–617; sequence YPVL.

It belongs to the pacC/RIM101 family. As to quaternary structure, binds to DNA. Interacts with palA/prr-1, which binds to the two YPX[LI] motifs and is required for proteolytic processing. Post-translationally, activated by C-terminal proteolytic cleavage by signaling protease (probably palB/RIM13) at neutral to alkaline ambient pH.

The protein resides in the cytoplasm. It localises to the nucleus. Its function is as follows. Transcription factor that mediates regulation of both acid- and alkaline-expressed genes in response to ambient pH. At alkaline ambient pH, activates transcription of alkaline-expressed genes (including pacc-1 itself) and represses transcription of acid-expressed genes. The sequence is that of pH-response transcription factor pacc-1 (pacc-1) from Neurospora crassa (strain ATCC 24698 / 74-OR23-1A / CBS 708.71 / DSM 1257 / FGSC 987).